The chain runs to 143 residues: Large ribosomal subunit protein uL11 (143 aa).

Belongs to the universal ribosomal protein uL11 family. As to quaternary structure, part of the ribosomal stalk of the 50S ribosomal subunit. Interacts with L10 and the large rRNA to form the base of the stalk. L10 forms an elongated spine to which L12 dimers bind in a sequential fashion forming a multimeric L10(L12)X complex. In terms of processing, one or more lysine residues are methylated.

Forms part of the ribosomal stalk which helps the ribosome interact with GTP-bound translation factors. This chain is Large ribosomal subunit protein uL11, found in Thiobacillus denitrificans (strain ATCC 25259 / T1).